We begin with the raw amino-acid sequence, 275 residues long: Large ribosomal subunit protein uL2c (275 aa).

2 disordered regions span residues 36–56 and 224–275; these read KNHR…HRGK and VMNP…RKRK. Basic residues predominate over residues 255–275; sequence LGRKTRKKPKYSNRYILRKRK.

It belongs to the universal ribosomal protein uL2 family. As to quaternary structure, part of the 50S ribosomal subunit.

The protein localises to the plastid. The protein resides in the chloroplast. The protein is Large ribosomal subunit protein uL2c (rpl2) of Gracilaria tenuistipitata var. liui (Red alga).